The following is a 200-amino-acid chain: 3-isopropylmalate dehydratase small subunit (200 aa).

It belongs to the LeuD family. LeuD type 1 subfamily. In terms of assembly, heterodimer of LeuC and LeuD.

It carries out the reaction (2R,3S)-3-isopropylmalate = (2S)-2-isopropylmalate. The protein operates within amino-acid biosynthesis; L-leucine biosynthesis; L-leucine from 3-methyl-2-oxobutanoate: step 2/4. In terms of biological role, catalyzes the isomerization between 2-isopropylmalate and 3-isopropylmalate, via the formation of 2-isopropylmaleate. This chain is 3-isopropylmalate dehydratase small subunit, found in Actinobacillus succinogenes (strain ATCC 55618 / DSM 22257 / CCUG 43843 / 130Z).